Here is a 621-residue protein sequence, read N- to C-terminus: Replication factor A protein 1 (621 aa).

Serine 2 carries the post-translational modification N-acetylserine. Serine 178 is modified (phosphoserine; by ATM or ATR). A DNA-binding region (OB) is located at residues 197–284 (WTIKARVSYK…PYELNLDRDT (88 aa)). A C4-type zinc finger spans residues 486–508 (CSNENCNKKVLEQPDGTWRCEKC).

It belongs to the replication factor A protein 1 family. Component of the heterotrimeric canonical replication protein A complex (RPA). Interacts with POB3. In terms of processing, the N-terminus is blocked.

Its subcellular location is the nucleus. Functionally, as part of the replication protein A (RPA/RP-A), a single-stranded DNA-binding heterotrimeric complex, may play an essential role in DNA replication, recombination and repair. Binds and stabilizes single-stranded DNA intermediates, preventing complementary DNA reannealing and recruiting different proteins involved in DNA metabolism. Binds to single-stranded sequences participating in DNA replication in addition to those mediating transcriptional repression (URS1) and activation (CAR1). Stimulates the activity of a cognate strand exchange protein (SEP1). It cooperates with T-AG and DNA topoisomerase I to unwind template DNA containing the simian virus 40 origin of DNA replication. This is Replication factor A protein 1 (RFA1) from Saccharomyces cerevisiae (strain ATCC 204508 / S288c) (Baker's yeast).